We begin with the raw amino-acid sequence, 447 residues long: MTKKIITLVGRPNVGKSTLFNRLSIRKKAIVHDLPGVTRDRKYTDGKIGSFKFLLIDTPGLEENPDNMGKRLMEQTTQAILEADLICLMVDGRSGVLPDDKLLSSFVRKYNKHCILVVNKCEKAFDFDKEYYKLGFDSIVIISAEHGTGLIDLYDEIIAKLSIKESIERNIADPFRGDCLQIVVSGRPNAGKSTFINAIINDERLLTGPEAGITRESIEIDWQYKNTHIKLIDTAGLRKKSTITASLEKLSTSDTINAIKFANTVILMIDALAHLKQQDLNIANHIINEGRSIIIVVNKWDLVEESEKEAFQAEFYYQINTHLPQIKGVPVLFISAINKQNIEQVLDACLKIYKIWNKKITTGKLNEWLNFTTKVHTLPLQKCGRRVRIKYMTQTKTRPPTFKLFSNNPEKITDSYTRYLVNNMRDTFDMHGIPIRFTYVKNKNPYV.

2 EngA-type G domains span residues 4–165 (KIIT…SIKE) and 180–357 (LQIV…KIWN). Residues 10–17 (GRPNVGKS), 57–61 (DTPGL), 119–122 (NKCE), 186–193 (GRPNAGKS), 233–237 (DTAGL), and 298–301 (NKWD) each bind GTP. The KH-like domain occupies 358 to 443 (KKITTGKLNE…PIRFTYVKNK (86 aa)).

It belongs to the TRAFAC class TrmE-Era-EngA-EngB-Septin-like GTPase superfamily. EngA (Der) GTPase family. In terms of assembly, associates with the 50S ribosomal subunit.

In terms of biological role, GTPase that plays an essential role in the late steps of ribosome biogenesis. The polypeptide is GTPase Der (Rickettsia typhi (strain ATCC VR-144 / Wilmington)).